The primary structure comprises 347 residues: 4-hydroxythreonine-4-phosphate dehydrogenase (347 aa).

Positions 137 and 138 each coordinate substrate. A divalent metal cation is bound by residues histidine 174, histidine 219, and histidine 274. Residues lysine 282, asparagine 291, and arginine 300 each contribute to the substrate site.

It belongs to the PdxA family. In terms of assembly, homodimer. It depends on Zn(2+) as a cofactor. The cofactor is Mg(2+). Co(2+) serves as cofactor.

The protein resides in the cytoplasm. The enzyme catalyses 4-(phosphooxy)-L-threonine + NAD(+) = 3-amino-2-oxopropyl phosphate + CO2 + NADH. The protein operates within cofactor biosynthesis; pyridoxine 5'-phosphate biosynthesis; pyridoxine 5'-phosphate from D-erythrose 4-phosphate: step 4/5. In terms of biological role, catalyzes the NAD(P)-dependent oxidation of 4-(phosphooxy)-L-threonine (HTP) into 2-amino-3-oxo-4-(phosphooxy)butyric acid which spontaneously decarboxylates to form 3-amino-2-oxopropyl phosphate (AHAP). The chain is 4-hydroxythreonine-4-phosphate dehydrogenase from Cupriavidus pinatubonensis (strain JMP 134 / LMG 1197) (Cupriavidus necator (strain JMP 134)).